The sequence spans 157 residues: Crossover junction endodeoxyribonuclease RuvC (157 aa).

Residues aspartate 7, glutamate 67, and aspartate 140 contribute to the active site. Residues aspartate 7, glutamate 67, and aspartate 140 each contribute to the Mg(2+) site.

The protein belongs to the RuvC family. As to quaternary structure, homodimer which binds Holliday junction (HJ) DNA. The HJ becomes 2-fold symmetrical on binding to RuvC with unstacked arms; it has a different conformation from HJ DNA in complex with RuvA. In the full resolvosome a probable DNA-RuvA(4)-RuvB(12)-RuvC(2) complex forms which resolves the HJ. Mg(2+) is required as a cofactor.

It is found in the cytoplasm. It catalyses the reaction Endonucleolytic cleavage at a junction such as a reciprocal single-stranded crossover between two homologous DNA duplexes (Holliday junction).. Its function is as follows. The RuvA-RuvB-RuvC complex processes Holliday junction (HJ) DNA during genetic recombination and DNA repair. Endonuclease that resolves HJ intermediates. Cleaves cruciform DNA by making single-stranded nicks across the HJ at symmetrical positions within the homologous arms, yielding a 5'-phosphate and a 3'-hydroxyl group; requires a central core of homology in the junction. The consensus cleavage sequence is 5'-(A/T)TT(C/G)-3'. Cleavage occurs on the 3'-side of the TT dinucleotide at the point of strand exchange. HJ branch migration catalyzed by RuvA-RuvB allows RuvC to scan DNA until it finds its consensus sequence, where it cleaves and resolves the cruciform DNA. The chain is Crossover junction endodeoxyribonuclease RuvC from Rickettsia massiliae (strain Mtu5).